Reading from the N-terminus, the 469-residue chain is Glutamate--tRNA ligase (469 aa).

A 'HIGH' region motif is present at residues 9–19; sequence PSPTGFLHVGG. The short motif at 236 to 240 is the 'KMSKS' region element; that stretch reads KLSKR. Lysine 239 serves as a coordination point for ATP.

Belongs to the class-I aminoacyl-tRNA synthetase family. Glutamate--tRNA ligase type 1 subfamily. Monomer.

It is found in the cytoplasm. It carries out the reaction tRNA(Glu) + L-glutamate + ATP = L-glutamyl-tRNA(Glu) + AMP + diphosphate. Functionally, catalyzes the attachment of glutamate to tRNA(Glu) in a two-step reaction: glutamate is first activated by ATP to form Glu-AMP and then transferred to the acceptor end of tRNA(Glu). The protein is Glutamate--tRNA ligase of Shewanella amazonensis (strain ATCC BAA-1098 / SB2B).